The following is a 158-amino-acid chain: G-protein-signaling modulator 3 (158 aa).

A disordered region spans residues 1-53; the sequence is MEAERPQEDGEQSLPQDDQGWPPVNSTARPWRSAPPSPPPPGTRHTALGPRSG. Residues Ser33 and Ser37 each carry the phosphoserine modification. Pro residues predominate over residues 33–42; it reads SAPPSPPPPG. Residues 43–53 are compositionally biased toward low complexity; the sequence is TRHTALGPRSG. A phosphoserine mark is found at Ser54 and Ser57. The residue at position 60 (Thr60) is a Phosphothreonine. Residues 60–82 form the GoLoco 1 domain; the sequence is TELLLDLVAEAQSRRLEEQRAAF. Residues 78–97 form a disordered region; it reads QRAAFHTPKVPPSLAPTPPR. Positions 86–96 are enriched in pro residues; that stretch reads KVPPSLAPTPP. 2 GoLoco domains span residues 102–124 and 130–153; these read KEQL…RSDP and GQEL…RSRP.

Its subcellular location is the cytoplasm. Interacts with subunit of G(i) alpha proteins and regulates the activation of G(i) alpha proteins. The protein is G-protein-signaling modulator 3 (Gpsm3) of Rattus norvegicus (Rat).